A 245-amino-acid polypeptide reads, in one-letter code: Heat shock transcription factor (245 aa).

Residues 17–115 (KSGFVNRLYR…LISLITRDKS (99 aa)) mediate DNA binding. The tract at residues 130-169 (SLQYLASCNYKQQKEINDLKDRIKTLETKYATLYEIISNA) is involved in trimerization.

The protein belongs to the HSF family. As to quaternary structure, homotrimer. Homotrimerization increases the affinity of HSF1 to DNA.

Its subcellular location is the nucleus. DNA-binding transcription factor that specifically binds heat shock promoter elements (HSE) and activates transcription. The polypeptide is Heat shock transcription factor (Enterocytozoon bieneusi (strain H348) (Microsporidian parasite)).